The following is a 370-amino-acid chain: MQLVAALAALGALVAPAVAYPHAPMNETLVDVQLTAVGNTMVKATITNKGDSVLNMLKFNTIMDENPTRKVMVFQDGAEVPFTGMMPRYLMSDLTEEFFTTLAPQASVEHSFDIATTHDLSAGGKYVISASGAIPTAEEYSTTITSTALYESNELHMEIDGTQAAAVEQAMKFTPEMQSIHSRALQKRTKIVGGSCNQNTLRATQNALGNSARLAQAASRAASQNAAKFQEYFRTNDANAKQRVIARLNSVARESSSANGGSTTYYCSDTMGGCKPRVLAYTLPSRNLVVNCPIYYNLPPLTKQCHAQDQATTTLHEFTHNPAVASPHCQDYAYGYQQCISLPAAKAVQNADNYALFANGMFYSLFTIIF.

Positions 1–19 are cleaved as a signal peptide; sequence MQLVAALAALGALVAPAVA. Residues 20 to 188 constitute a propeptide that is removed on maturation; the sequence is YPHAPMNETL…SIHSRALQKR (169 aa). Disulfide bonds link Cys196–Cys267 and Cys274–Cys292. His316 contributes to the Zn(2+) binding site. Glu317 is an active-site residue. Zn(2+)-binding residues include His320 and Asp331.

The protein belongs to the peptidase M35 family. The cofactor is Zn(2+).

It is found in the secreted. The enzyme catalyses Preferential cleavage of bonds with hydrophobic residues in P1'. Also 3-Asn-|-Gln-4 and 8-Gly-|-Ser-9 bonds in insulin B chain.. Functionally, probable secreted metalloprotease that shows high activities on basic nuclear substrates such as histone and protamine. May be involved in virulence. This Arthroderma benhamiae (strain ATCC MYA-4681 / CBS 112371) (Trichophyton mentagrophytes) protein is Probable neutral protease 2 homolog ARB_03949.